The chain runs to 85 residues: Teretoxin Tan9.6 (85 aa).

The signal sequence occupies residues 1–21 (MMSKTGALLLTFMILVLFSMA). Residues 22–52 (AADALGERFEDHEQKIREQDAGVGLLSLMGR) constitute a propeptide that is removed on maturation.

In terms of processing, contains 3 disulfide bonds. In terms of tissue distribution, expressed by the venom duct.

It is found in the secreted. The polypeptide is Teretoxin Tan9.6 (Terebra anilis (Auger snail)).